Here is a 90-residue protein sequence, read N- to C-terminus: Small ribosomal subunit protein bS16 (90 aa).

This sequence belongs to the bacterial ribosomal protein bS16 family.

The protein is Small ribosomal subunit protein bS16 of Bacillus anthracis (strain A0248).